Here is a 552-residue protein sequence, read N- to C-terminus: Protein TRM32 (552 aa).

Residues 295–379 (TDLPRDSSTS…NKTAEKTETL (85 aa)) form a disordered region. A compositionally biased stretch (basic and acidic residues) spans 331–351 (VRAEKEEKYEVQEERSQENHL). Over residues 352 to 371 (DSSNQRILQQEPDSVPSTNK) the composition is skewed to polar residues.

The protein is Protein TRM32 (TRM32) of Arabidopsis thaliana (Mouse-ear cress).